The following is a 313-amino-acid chain: Tyrosine recombinase XerC (313 aa).

Residues 11 to 97 (NSLQKPLERF…SLRSFFDFLI (87 aa)) form the Core-binding (CB) domain. The 181-residue stretch at 118-298 (PLPKNLDVDE…DFQHLAQAYD (181 aa)) folds into the Tyr recombinase domain. Residues Arg-157, Lys-181, His-250, Arg-253, and His-276 contribute to the active site. Tyr-285 serves as the catalytic O-(3'-phospho-DNA)-tyrosine intermediate.

It belongs to the 'phage' integrase family. XerC subfamily. Forms a cyclic heterotetrameric complex composed of two molecules of XerC and two molecules of XerD.

The protein resides in the cytoplasm. Site-specific tyrosine recombinase, which acts by catalyzing the cutting and rejoining of the recombining DNA molecules. The XerC-XerD complex is essential to convert dimers of the bacterial chromosome into monomers to permit their segregation at cell division. It also contributes to the segregational stability of plasmids. This chain is Tyrosine recombinase XerC, found in Vibrio campbellii (strain ATCC BAA-1116).